The primary structure comprises 301 residues: uncharacterized protein (301 aa).

An N-terminal signal peptide occupies residues 1–21 (MKIKLILVLIVFLTIVNVNNS). N-linked (GlcNAc...) asparagine glycosylation is found at asparagine 19, asparagine 59, asparagine 102, and asparagine 180.

It localises to the secreted. This is an uncharacterized protein from Dictyostelium discoideum (Social amoeba).